A 227-amino-acid polypeptide reads, in one-letter code: Urease accessory protein UreF (227 aa).

It belongs to the UreF family. UreD, UreF and UreG form a complex that acts as a GTP-hydrolysis-dependent molecular chaperone, activating the urease apoprotein by helping to assemble the nickel containing metallocenter of UreC. The UreE protein probably delivers the nickel.

The protein localises to the cytoplasm. Required for maturation of urease via the functional incorporation of the urease nickel metallocenter. The chain is Urease accessory protein UreF from Methylobacillus flagellatus (strain ATCC 51484 / DSM 6875 / VKM B-1610 / KT).